A 134-amino-acid chain; its full sequence is Ribosome-binding factor A (134 aa).

This sequence belongs to the RbfA family. In terms of assembly, monomer. Binds 30S ribosomal subunits, but not 50S ribosomal subunits or 70S ribosomes.

It localises to the cytoplasm. One of several proteins that assist in the late maturation steps of the functional core of the 30S ribosomal subunit. Associates with free 30S ribosomal subunits (but not with 30S subunits that are part of 70S ribosomes or polysomes). Required for efficient processing of 16S rRNA. May interact with the 5'-terminal helix region of 16S rRNA. In Baumannia cicadellinicola subsp. Homalodisca coagulata, this protein is Ribosome-binding factor A.